Consider the following 342-residue polypeptide: MRVISRARSACTWTSCTSLSPCSTSCPPSPAAPTLLRRRSLPQQRRRPSSSPNRRVRGVTTSPCPTRSLVYKRRVGAPQRLCAETVATMQAQEANALLLSRMEALEWFKKFTVWLRVYAIFIFQLAFSFGLGSVFWLGFPQNRNFCVENYSFFLTVLVPIVCMFITYTLGNEHPSNATVLFIYLLANSLTAAIFQMCSESRVLVGSYVMTLALFISFTGLAFLGGRDRRRWKCISCVYVVMLLSFLTLALLSDADWLQKIVVTLCAFSISFFLGILAYDSLMVIFFCPPNQCIRHAVCLYLDSMAIFLTLLLMLSGPRWISLSDGVPLDNGTLTAASTTGKS.

The tract at residues 21 to 64 (PCSTSCPPSPAAPTLLRRRSLPQQRRRPSSSPNRRVRGVTTSPC) is disordered. The span at 36-48 (LRRRSLPQQRRRP) shows a compositional bias: basic residues. Residues 119–139 (AIFIFQLAFSFGLGSVFWLGF) traverse the membrane as a helical segment. Asn149 carries N-linked (GlcNAc...) asparagine; by host glycosylation. A helical transmembrane segment spans residues 150 to 170 (YSFFLTVLVPIVCMFITYTLG). N-linked (GlcNAc...) asparagine; by host glycosylation is present at Asn176. Helical transmembrane passes span 177 to 197 (ATVL…FQMC), 202 to 222 (VLVG…GLAF), 231 to 251 (WKCI…LALL), 266 to 286 (AFSI…VIFF), and 296 to 316 (AVCL…MLSG). An N-linked (GlcNAc...) asparagine; by host glycan is attached at Asn330.

The protein belongs to the cytomegalovirus US12 family.

The protein localises to the membrane. The polypeptide is Transmembrane protein HWLF3 (US20) (Human cytomegalovirus (strain Towne) (HHV-5)).